Consider the following 320-residue polypeptide: Ubiquitin-like domain-containing CTD phosphatase 1 (320 aa).

The 72-residue stretch at 6–77 (VVVIVKWSGK…LKPNFKLMMV (72 aa)) folds into the Ubiquitin-like domain. Positions 136–296 (PREGKKLLVL…LKLSDYLRKI (161 aa)) constitute an FCP1 homology domain. Residues D146, D148, and D255 each coordinate Mg(2+).

The cofactor is Mg(2+).

The protein localises to the nucleus. It catalyses the reaction O-phospho-L-seryl-[protein] + H2O = L-seryl-[protein] + phosphate. The enzyme catalyses O-phospho-L-threonyl-[protein] + H2O = L-threonyl-[protein] + phosphate. Functionally, dephosphorylates 26S nuclear proteasomes, thereby decreasing their proteolytic activity. Recruited to the 19S regulatory particle of the 26S proteasome where it dephosphorylates 19S component Rpt1 which impairs Rpt1 ATPase activity and disrupts 26S proteasome assembly. This is Ubiquitin-like domain-containing CTD phosphatase 1 from Drosophila melanogaster (Fruit fly).